The chain runs to 717 residues: Ferric reduction oxidase 3, mitochondrial (717 aa).

A mitochondrion-targeting transit peptide spans 1 to 23 (MAARGRLVVARGNRSFSSIIRKY). The next 6 helical transmembrane spans lie at 40–59 (LLTMVILMGTVVIWIMMPTS), 86–104 (LLVYMFPMILLASLGSIYL), 140–163 (LGIVTVTEVMFLMMFMALLLWSLA), 232–255 (YHIWLGNLVMTLFTSHGLCYCIYW), 306–330 (THYLYMVFMLFFVFHVGISYALISF), and 353–373 (LVSARVLPCETVELNFSKNPM). Residues 198–317 (GLTGNICLGF…YLYMVFMLFF (120 aa)) form the Ferric oxidoreductase domain. 4 residues coordinate heme: His233, His247, His307, and His320. Residues 346-451 (QSRNNVKLVS…EGPYGPASTD (106 aa)) form the FAD-binding FR-type domain. 395–398 (HPFT) contacts FAD. 443–446 (GPYG) lines the NAD(+) pocket. 2 consecutive transmembrane segments (helical) span residues 564–586 (WLWLATILSSSFMIFIIIIAIIS) and 606–627 (SLIYLLAISISVVATSTVAMLC).

This sequence belongs to the ferric reductase (FRE) family. Requires FAD as cofactor. As to expression, expressed in root steele. Detected in shoots, leaves, stems, siliques, flowers and cotyledons.

The protein localises to the mitochondrion membrane. The catalysed reaction is 2 a Fe(II)-siderophore + NAD(+) + H(+) = 2 a Fe(III)-siderophore + NADH. Its function is as follows. Ferric chelate reductase involved in iron reduction in roots. May participate in the transport of electrons to a Fe(3+) ion via FAD and heme intermediates. This Arabidopsis thaliana (Mouse-ear cress) protein is Ferric reduction oxidase 3, mitochondrial (FRO3).